Here is a 433-residue protein sequence, read N- to C-terminus: ASSTNLKDVLAALIPKEQARIKTFRQQHGGTALGQITVDMSYGGMRGMKGLVYETSVLDPDEGIRFRGFSIPECQKLLPKGGXGGEPLPEGLFWLLVTGQIPTGAQVSWLSKEWAKRAALPSHVVTMLDNFPTNLHPMSQLSAAITALNSESNFARAYAEGILRTKYWEMVYESAMDLIAKLPCVAAKIYRNLYRAGSSIGAIDSKLDWSHNFTNMLGYTDAQFTELMRLYLTIHSDHEGGNVSAHTSHLVGSALSDPYLSFAAAMNGLAGPLHGLANQEVLGWLAQLQKAXXXAGADASLRDYIWNTLNSGRVVPGYGHAVLRKTDPRYTCQREFALKHLPGDPMFKLVAQLYKIVPNVLLEQGAAANPWPNVDAHSGVLLQYYGMTEMNYYTVLFGVSRALGVLAQLIWSRALGFPLERPKSMSTDGLIAL.

Catalysis depends on residues histidine 274 and histidine 320. Arginine 329 serves as a coordination point for oxaloacetate. Aspartate 375 is an active-site residue. Positions 401 and 421 each coordinate oxaloacetate.

This sequence belongs to the citrate synthase family. Homodimer.

Its subcellular location is the mitochondrion matrix. The enzyme catalyses oxaloacetate + acetyl-CoA + H2O = citrate + CoA + H(+). The protein operates within carbohydrate metabolism; tricarboxylic acid cycle; isocitrate from oxaloacetate: step 1/2. Key enzyme of the Krebs tricarboxylic acid cycle which catalyzes the synthesis of citrate from acetyl coenzyme A and oxaloacetate. The protein is Citrate synthase, mitochondrial (CS) of Gallus gallus (Chicken).